A 162-amino-acid polypeptide reads, in one-letter code: Caveolin-2 (162 aa).

Over 1-86 the chain is Cytoplasmic; that stretch reads MGLETEKADV…FEISKYVMYK (86 aa). Position 19 is a phosphotyrosine; by SRC (Tyr19). Phosphoserine is present on residues Ser20 and Ser23. At Tyr27 the chain carries Phosphotyrosine; by SRC. Ser36 is modified (phosphoserine). The helical intramembrane region spans 87-107; the sequence is FLTVFLAIPLAFIAGILFATL. At 108 to 162 the chain is on the cytoplasmic side; that stretch reads SCLHIWILMPFVKTCLMVLPSVQTIWKSVTDVIIAPLCTSVGRSFSSVSLQLSQD.

This sequence belongs to the caveolin family. In terms of assembly, monomer or homodimer. Interacts with CAV1; the interaction forms a stable heterooligomeric complex that is required for targeting to lipid rafts and for caveolae formation. Tyrosine phosphorylated forms do not form heterooligomers with the Tyr-19-phosphorylated form existing as a monomer or dimer, and the Tyr-27-form as a monomer only. Interacts (tyrosine phosphorylated form) with the SH2 domain-containing proteins, RASA1, NCK1 and SRC. Interacts (tyrosine phosphorylated form) with INSR, the interaction (Tyr-27-phosphorylated form) is increased on insulin stimulation. Interacts (Tyr-19 phosphorylated form) with MAPK1 (phosphorylated form); the interaction, promoted by insulin, leads to nuclear location and MAPK1 activation. Interacts with STAT3; the interaction is increased on insulin-induced tyrosine phosphorylation leading to STAT activation. Post-translationally, phosphorylated on serine and tyrosine residues. CAV1 promotes phosphorylation on Ser-23 which then targets the complex to the plasma membrane, lipid rafts and caveolae. Phosphorylation on Ser-36 appears to modulate mitosis in endothelial cells. Phosphorylation on both Tyr-19 and Tyr-27 is required for insulin-induced 'Ser-727' phosphorylation of STAT3 and its activation. Phosphorylation on Tyr-19 is required for insulin-induced phosphorylation of MAPK1 and DNA binding of STAT3. Tyrosine phosphorylation is induced by both EGF and insulin (By. similarity).

It localises to the nucleus. The protein resides in the cytoplasm. It is found in the golgi apparatus membrane. The protein localises to the cell membrane. Its subcellular location is the membrane. It localises to the caveola. In terms of biological role, may act as a scaffolding protein within caveolar membranes. Interacts directly with G-protein alpha subunits and can functionally regulate their activity. Acts as an accessory protein in conjunction with CAV1 in targeting to lipid rafts and driving caveolae formation. The Ser-36 phosphorylated form has a role in modulating mitosis in endothelial cells. Positive regulator of cellular mitogenesis of the MAPK signaling pathway. Required for the insulin-stimulated nuclear translocation and activation of MAPK1 and STAT3, and the subsequent regulation of cell cycle progression. In Pongo abelii (Sumatran orangutan), this protein is Caveolin-2 (CAV2).